Reading from the N-terminus, the 405-residue chain is Threonine synthase (405 aa).

Lys-106 carries the N6-(pyridoxal phosphate)lysine modification. Residues Asn-132, 233–237 (GNAGN), and Thr-371 contribute to the pyridoxal 5'-phosphate site.

Belongs to the threonine synthase family. Pyridoxal 5'-phosphate serves as cofactor.

It carries out the reaction O-phospho-L-homoserine + H2O = L-threonine + phosphate. It functions in the pathway amino-acid biosynthesis; L-threonine biosynthesis; L-threonine from L-aspartate: step 5/5. In terms of biological role, catalyzes the gamma-elimination of phosphate from L-phosphohomoserine and the beta-addition of water to produce L-threonine. This is Threonine synthase (thrC) from Methanocaldococcus jannaschii (strain ATCC 43067 / DSM 2661 / JAL-1 / JCM 10045 / NBRC 100440) (Methanococcus jannaschii).